The primary structure comprises 450 residues: Tol-Pal system protein TolB (450 aa).

The first 47 residues, 1 to 47, serve as a signal peptide directing secretion; sequence MRKLWAPNWLSAKRHHANQAATRLIGRHALMAWLAAALALSAGAAQA.

It belongs to the TolB family. As to quaternary structure, the Tol-Pal system is composed of five core proteins: the inner membrane proteins TolA, TolQ and TolR, the periplasmic protein TolB and the outer membrane protein Pal. They form a network linking the inner and outer membranes and the peptidoglycan layer.

The protein resides in the periplasm. Part of the Tol-Pal system, which plays a role in outer membrane invagination during cell division and is important for maintaining outer membrane integrity. In Cupriavidus pinatubonensis (strain JMP 134 / LMG 1197) (Cupriavidus necator (strain JMP 134)), this protein is Tol-Pal system protein TolB.